Here is a 456-residue protein sequence, read N- to C-terminus: Putative dihydroorotase (456 aa).

It belongs to the metallo-dependent hydrolases superfamily. DHOase family. Class I DHOase subfamily.

The enzyme catalyses (S)-dihydroorotate + H2O = N-carbamoyl-L-aspartate + H(+). The protein operates within pyrimidine metabolism; UMP biosynthesis via de novo pathway; (S)-dihydroorotate from bicarbonate: step 3/3. In terms of biological role, catalyzes the reversible cyclization of carbamoyl aspartate to dihydroorotate. The sequence is that of Putative dihydroorotase from Rhodopirellula baltica (strain DSM 10527 / NCIMB 13988 / SH1).